We begin with the raw amino-acid sequence, 323 residues long: Methionyl-tRNA formyltransferase (323 aa).

Serine 113 to proline 116 contributes to the (6S)-5,6,7,8-tetrahydrofolate binding site.

Belongs to the Fmt family.

It catalyses the reaction L-methionyl-tRNA(fMet) + (6R)-10-formyltetrahydrofolate = N-formyl-L-methionyl-tRNA(fMet) + (6S)-5,6,7,8-tetrahydrofolate + H(+). Functionally, attaches a formyl group to the free amino group of methionyl-tRNA(fMet). The formyl group appears to play a dual role in the initiator identity of N-formylmethionyl-tRNA by promoting its recognition by IF2 and preventing the misappropriation of this tRNA by the elongation apparatus. This Porphyromonas gingivalis (strain ATCC BAA-308 / W83) protein is Methionyl-tRNA formyltransferase.